A 677-amino-acid polypeptide reads, in one-letter code: Penicillin-binding protein activator LpoA (677 aa).

A signal peptide spans 1 to 26; that stretch reads MLPSKIVRHKAGRFVPVLLAGLILAA. The N-palmitoyl cysteine moiety is linked to residue Cys-27. Cys-27 carries the S-diacylglycerol cysteine lipid modification. The disordered stretch occupies residues 309-359; that stretch reads QPADANAVVSPSANPAAAQQSGTAQQPATTQQQPQQQPAAEPASNAQVKVY. A compositionally biased stretch (low complexity) spans 313-355; sequence ANAVVSPSANPAAAQQSGTAQQPATTQQQPQQQPAAEPASNAQ.

Belongs to the LpoA family. Interacts with PBP1a.

The protein resides in the cell outer membrane. In terms of biological role, regulator of peptidoglycan synthesis that is essential for the function of penicillin-binding protein 1A (PBP1a). The chain is Penicillin-binding protein activator LpoA from Pantoea ananatis (strain LMG 20103).